A 424-amino-acid chain; its full sequence is 26S proteasome regulatory subunit 6A homolog A (424 aa).

The interval 1-21 (MATPMVEDTSSFEEDQLASMS) is disordered. The residue at position 2 (Ala-2) is an N-acetylalanine. Ser-19 carries the phosphoserine modification. Position 212 to 219 (212 to 219 (GPPGTGKT)) interacts with ATP. Lys-235 is covalently cross-linked (Glycyl lysine isopeptide (Lys-Gly) (interchain with G-Cter in ubiquitin)). Thr-278 is subject to O-acetylthreonine. Glycyl lysine isopeptide (Lys-Gly) (interchain with G-Cter in ubiquitin) cross-links involve residues Lys-279 and Lys-416.

It belongs to the AAA ATPase family. As to quaternary structure, component of the 19S regulatory particle (RP/PA700) base subcomplex of the 26S proteasome. The 26S proteasome is composed of a core protease (CP), known as the 20S proteasome, capped at one or both ends by the 19S regulatory particle (RP/PA700). The RP/PA700 complex is composed of at least 17 different subunits in two subcomplexes, the base and the lid, which form the portions proximal and distal to the 20S proteolytic core, respectively. As to expression, ubiquitous.

The protein resides in the cytoplasm. It is found in the nucleus. In terms of biological role, the 26S proteasome is involved in the ATP-dependent degradation of ubiquitinated proteins. The regulatory (or ATPase) complex confers ATP dependency and substrate specificity to the 26S complex. Interacts with transit peptides of proteins targeted to the chloroplast, and may be involved in the degradation of unimported plastid protein precursors. Plays a essential role in the gametophyte development. Involved in tolerance to zinc deficiency, possibly through alleviation of oxidative stresses or processing of poly-ubiquitinated proteins. This is 26S proteasome regulatory subunit 6A homolog A from Arabidopsis thaliana (Mouse-ear cress).